Here is a 954-residue protein sequence, read N- to C-terminus: Glycine dehydrogenase (decarboxylating) (954 aa).

N6-(pyridoxal phosphate)lysine is present on K701.

It belongs to the GcvP family. As to quaternary structure, the glycine cleavage system is composed of four proteins: P, T, L and H. Pyridoxal 5'-phosphate serves as cofactor.

It catalyses the reaction N(6)-[(R)-lipoyl]-L-lysyl-[glycine-cleavage complex H protein] + glycine + H(+) = N(6)-[(R)-S(8)-aminomethyldihydrolipoyl]-L-lysyl-[glycine-cleavage complex H protein] + CO2. The glycine cleavage system catalyzes the degradation of glycine. The P protein binds the alpha-amino group of glycine through its pyridoxal phosphate cofactor; CO(2) is released and the remaining methylamine moiety is then transferred to the lipoamide cofactor of the H protein. This is Glycine dehydrogenase (decarboxylating) from Bordetella pertussis (strain Tohama I / ATCC BAA-589 / NCTC 13251).